A 1590-amino-acid chain; its full sequence is Pentafunctional AROM polypeptide (1590 aa).

The 3-dehydroquinate synthase stretch occupies residues 1–387 (MGSTTFENPT…YEPKASVVED (387 aa)). NAD(+) is bound by residues 49 to 51 (DTN), 86 to 89 (ENSK), 117 to 119 (GGV), and Asp-122. Arg-133 lines the 7-phospho-2-dehydro-3-deoxy-D-arabino-heptonate pocket. Position 142–143 (142–143 (TT)) interacts with NAD(+). 2 residues coordinate 7-phospho-2-dehydro-3-deoxy-D-arabino-heptonate: Asp-149 and Lys-155. Lys-164 lines the NAD(+) pocket. 7-phospho-2-dehydro-3-deoxy-D-arabino-heptonate is bound at residue Asn-165. NAD(+)-binding positions include 182-185 (FLET) and Asn-193. Glu-197 provides a ligand contact to Zn(2+). Residues 197–200 (EVVK) and Lys-253 each bind 7-phospho-2-dehydro-3-deoxy-D-arabino-heptonate. The active-site Proton acceptor; for 3-dehydroquinate synthase activity is the Glu-263. Residues 267-271 (RNILN) and His-274 contribute to the 7-phospho-2-dehydro-3-deoxy-D-arabino-heptonate site. His-274 provides a ligand contact to Zn(2+). Residue His-278 is the Proton acceptor; for 3-dehydroquinate synthase activity of the active site. The 7-phospho-2-dehydro-3-deoxy-D-arabino-heptonate site is built by His-290 and Lys-359. His-290 serves as a coordination point for Zn(2+). The EPSP synthase stretch occupies residues 400–841 (VRPSVPETLN…WDILSKSFQV (442 aa)). Cys-823 acts as the For EPSP synthase activity in catalysis. The interval 863–1055 (DKSIFIIGMR…RNKPQSFFVS (193 aa)) is shikimate kinase. 870–877 (GMRGAGKT) contributes to the ATP binding site. Residues 1056–1276 (LTMPDISGAA…AAPGQLSAAE (221 aa)) are 3-dehydroquinase. His-1179 (proton acceptor; for 3-dehydroquinate dehydratase activity) is an active-site residue. Catalysis depends on Lys-1207, which acts as the Schiff-base intermediate with substrate; for 3-dehydroquinate dehydratase activity. A shikimate dehydrogenase region spans residues 1289 to 1590 (PKSFYLFGTP…KMDKHPTFVC (302 aa)).

It in the N-terminal section; belongs to the sugar phosphate cyclases superfamily. Dehydroquinate synthase family. In the 2nd section; belongs to the EPSP synthase family. This sequence in the 3rd section; belongs to the shikimate kinase family. The protein in the 4th section; belongs to the type-I 3-dehydroquinase family. It in the C-terminal section; belongs to the shikimate dehydrogenase family. Homodimer. Requires Zn(2+) as cofactor.

The protein resides in the cytoplasm. The enzyme catalyses 7-phospho-2-dehydro-3-deoxy-D-arabino-heptonate = 3-dehydroquinate + phosphate. The catalysed reaction is 3-dehydroquinate = 3-dehydroshikimate + H2O. It carries out the reaction shikimate + NADP(+) = 3-dehydroshikimate + NADPH + H(+). It catalyses the reaction shikimate + ATP = 3-phosphoshikimate + ADP + H(+). The enzyme catalyses 3-phosphoshikimate + phosphoenolpyruvate = 5-O-(1-carboxyvinyl)-3-phosphoshikimate + phosphate. Its pathway is metabolic intermediate biosynthesis; chorismate biosynthesis; chorismate from D-erythrose 4-phosphate and phosphoenolpyruvate: step 2/7. The protein operates within metabolic intermediate biosynthesis; chorismate biosynthesis; chorismate from D-erythrose 4-phosphate and phosphoenolpyruvate: step 3/7. It participates in metabolic intermediate biosynthesis; chorismate biosynthesis; chorismate from D-erythrose 4-phosphate and phosphoenolpyruvate: step 4/7. It functions in the pathway metabolic intermediate biosynthesis; chorismate biosynthesis; chorismate from D-erythrose 4-phosphate and phosphoenolpyruvate: step 5/7. Its pathway is metabolic intermediate biosynthesis; chorismate biosynthesis; chorismate from D-erythrose 4-phosphate and phosphoenolpyruvate: step 6/7. The AROM polypeptide catalyzes 5 consecutive enzymatic reactions in prechorismate polyaromatic amino acid biosynthesis. This chain is Pentafunctional AROM polypeptide, found in Sclerotinia sclerotiorum (White mold).